We begin with the raw amino-acid sequence, 2387 residues long: Paternally-expressed gene 3 protein (2387 aa).

One can recognise an SCAN box domain in the interval 44–126 (HQRFRNFLYV…ALLEDYEAMY (83 aa)). 4 disordered regions span residues 127–194 (EPED…RDLA), 262–305 (DGHS…ICEA), 321–371 (ARSS…AFGG), and 392–423 (RYHF…EARR). Basic and acidic residues-rich tracts occupy residues 160–179 (SERE…DRWP), 291–305 (PETK…ICEA), 321–364 (ARSS…ERGP), and 404–423 (HDPR…EARR). The segment at 451–473 (YVCDECGRSFAVISEFVEHQIVH) adopts a C2H2-type 1 zinc-finger fold. The disordered stretch occupies residues 492 to 542 (SEAQSRPEGARRSEGAQAAGLAEHRGGQAQEHLRGSGDEEQDEPFLPSPTF). Positions 513 to 528 (AEHRGGQAQEHLRGSG) are enriched in basic and acidic residues. 2 consecutive C2H2-type zinc fingers follow at residues 555-577 (YECK…QKIH) and 610-632 (YECK…QKTH). The C2H2-type 4; degenerate zinc-finger motif lies at 668 to 690 (YDFREGGDAFGRSSDFMEHQKIH). 3 disordered regions span residues 704 to 747 (PLLH…EARG), 764 to 797 (FRPP…ESPY), and 820 to 858 (DHLA…NIER). Over residues 711–720 (MPGSQKSHTI) the composition is skewed to polar residues. A compositionally biased stretch (basic residues) spans 846–856 (HQKARAKKKNI). A C2H2-type 5 zinc finger spans residues 884-906 (YECLECGEFFVRSSELAEHQKIH). 57 consecutive repeat copies span residues 965 to 973 (PAQTSYAVE), 974 to 982 (PAQTSYAEE), 983 to 991 (PAQTSYTEA), 1001 to 1009 (PAQTSCIEE), 1010 to 1018 (PAQTSYTNP), 1028 to 1036 (PAQTSYTEA), 1046 to 1054 (PAQTSCIEE), 1055 to 1063 (PAQTSYTNP), 1073 to 1081 (PAQTSYTEA), 1091 to 1099 (PAQTNYTEE), 1109 to 1117 (PSQTSCIEE), 1118 to 1126 (PAQTSYTDP), 1136 to 1144 (PAQTSYTQE), 1145 to 1153 (PAQTSCTEE), 1154 to 1162 (PAQTSCTEE), 1163 to 1171 (PAQTSYTQE), 1172 to 1180 (PAQTSYTKE), 1190 to 1198 (PAQTSCIEE), 1199 to 1207 (PAQTNYTKE), 1217 to 1225 (PAQTSYTDP), 1235 to 1243 (PAQTNYTVE), 1253 to 1261 (PSQTSCIEE), 1280 to 1288 (PAQTSCTEE), 1289 to 1297 (PAQTSYTQE), 1298 to 1306 (PAQTSCTEE), 1307 to 1315 (PAQTSCTEE), 1316 to 1324 (PAQTSYTQE), 1325 to 1333 (PAQTSCTEE), 1334 to 1342 (PAQTSYTQE), 1343 to 1351 (PAQTSCTEE), 1352 to 1360 (PAQTSYTEE), 1361 to 1369 (PAQTSYTEE), 1370 to 1378 (PAQTSYTQE), 1379 to 1387 (PAQTSCTEE), 1388 to 1396 (PAQTSYTEE), 1397 to 1405 (PAQTSYTEE), 1406 to 1414 (PAQTSYTQE), 1415 to 1423 (PAQTSYTEE), 1424 to 1432 (PAQTSYTEE), 1433 to 1441 (PAQTSYAQE), 1442 to 1450 (PAQTSYAEE), 1451 to 1459 (PAQTSYAEE), 1460 to 1468 (PAQTSYAEE), 1469 to 1477 (PAQTSYTQE), 1478 to 1486 (PAQTNYTEE), 1496 to 1504 (PAQTSYAEE), 1505 to 1513 (PAQTSYPEE), 1514 to 1522 (PAQTSYAEE), 1523 to 1531 (PAQTSYAEE), 1532 to 1540 (PAQTSYPEE), 1541 to 1549 (PAQTSYTEE), 1550 to 1558 (PAQTSYAKE), 1559 to 1567 (PAQTSYPEE), 1568 to 1576 (PAQTSYAEE), 1577 to 1585 (PAQTSYAEE), 1586 to 1594 (PAQTSYAEE), and 1595 to 1603 (PAQTSYSEE). 2 stretches are compositionally biased toward polar residues: residues 965–989 (PAQT…TSYT) and 1001–1020 (PAQT…NPAA). Residues 965-1603 (PAQTSYAVEP…EPAQTSYSEE (639 aa)) form a 37 X 9 AA repeat of P-A-Q-T-X-Y-X-X-E region. Residues 965 to 1651 (PAQTSYAVEP…RPDMPRNQPR (687 aa)) form a disordered region. Polar residues predominate over residues 1046 to 1079 (PAQTSCIEEPAQTSYTNPAAETSYTEEPAQTSYT). Polar residues-rich tracts occupy residues 1107–1178 (EEPS…TSYT), 1190–1206 (PAQT…NYTK), 1217–1242 (PAQT…NYTV), 1251–1484 (EEPS…TNYT), and 1496–1601 (PAQT…TSYS). The C2H2-type 6; degenerate zinc-finger motif lies at 1859 to 1881 (NECKECGECFATVEDLGRHQKIY). The tract at residues 1900-1921 (LGLDGSPEEELEEQEEPEEPED) is disordered. The span at 1905 to 1921 (SPEEELEEQEEPEEPED) shows a compositional bias: acidic residues. 5 C2H2-type zinc fingers span residues 1924 to 1946 (YGCK…QKVH), 1980 to 2002 (YECP…QKVH), 2040 to 2062 (PQCQ…ARGH), 2097 to 2119 (YECE…MRVH), and 2148 to 2170 (YECK…QKLH). The segment at 2059–2102 (ARGHAGEGLPDQGQGGAGAAGPGPAPTEPQQDPGEEQRYECETC) is disordered. Residues 2204–2322 (NVEAAEPEVE…DCGECGETFP (119 aa)) are disordered. Composition is skewed to acidic residues over residues 2208 to 2228 (AEPE…EVEA) and 2257 to 2311 (EQPD…EEPY). C2H2-type zinc fingers lie at residues 2312–2334 (YDCG…LTAH) and 2363–2385 (FKCD…QNTH).

The protein belongs to the krueppel C2H2-type zinc-finger protein family. In terms of assembly, homodimer. Interacts with SIAH1A and SIAH2. Interacts with TRAF2. In terms of tissue distribution, expressed at high levels in the cerebellum and at moderate levels in the testis and ovary.

The protein resides in the nucleus. It is found in the cytoplasm. Its function is as follows. Induces apoptosis in cooperation with SIAH1A. Acts as a mediator between p53/TP53 and BAX in a neuronal death pathway that is activated by DNA damage. Acts synergistically with TRAF2 and inhibits TNF induced apoptosis through activation of NF-kappa-B. The chain is Paternally-expressed gene 3 protein (PEG3) from Bos taurus (Bovine).